Here is a 465-residue protein sequence, read N- to C-terminus: Cysteine--tRNA ligase (465 aa).

C27 is a Zn(2+) binding site. The short motif at P29–N39 is the 'HIGH' region element. 3 residues coordinate Zn(2+): C207, H232, and E236. The 'KMSKS' region signature appears at K264 to S268. K267 provides a ligand contact to ATP.

It belongs to the class-I aminoacyl-tRNA synthetase family. In terms of assembly, monomer. The cofactor is Zn(2+).

It is found in the cytoplasm. It carries out the reaction tRNA(Cys) + L-cysteine + ATP = L-cysteinyl-tRNA(Cys) + AMP + diphosphate. The sequence is that of Cysteine--tRNA ligase from Caldicellulosiruptor saccharolyticus (strain ATCC 43494 / DSM 8903 / Tp8T 6331).